Consider the following 297-residue polypeptide: Putative thiosulfate sulfurtransferase SseA (297 aa).

Rhodanese domains lie at 31–138 (GAPG…ETTL) and 168–286 (ILGA…VPIV). The active-site Cysteine persulfide intermediate is the C245. R250 provides a ligand contact to substrate.

The enzyme catalyses thiosulfate + hydrogen cyanide = thiocyanate + sulfite + 2 H(+). The protein is Putative thiosulfate sulfurtransferase SseA (sseA) of Mycobacterium tuberculosis (strain CDC 1551 / Oshkosh).